A 362-amino-acid chain; its full sequence is Probable endopolygalacturonase B (362 aa).

The first 20 residues, 1–20 (MHFLQNAVVAATMGAALAAA), serve as a signal peptide directing secretion. A propeptide spanning residues 21-25 (APLEK) is cleaved from the precursor. Cys-28 and Cys-43 form a disulfide bridge. PbH1 repeat units follow at residues 155-184 (ADHLTITDVTIDNSAGTSKGHNTDAFDIGQ), 185-206 (STYITIDGATVYNQDDCLAINS), 207-227 (GEHITFTNGYCDGGHGLSIGS), 236-257 (VNDVTISNSKVLNSQNGVRIKT), 265-287 (VENVKFEDITLSDISKYGIVVEQ), and 299-344 (TNGV…DVTG). Asp-199 functions as the Proton donor in the catalytic mechanism. Cys-201 and Cys-217 are joined by a disulfide. The active site involves His-221. A disulfide bridge connects residues Cys-327 and Cys-332. The N-linked (GlcNAc...) asparagine glycan is linked to Asn-334. Cys-351 and Cys-360 are oxidised to a cystine.

Belongs to the glycosyl hydrolase 28 family.

It localises to the secreted. It catalyses the reaction (1,4-alpha-D-galacturonosyl)n+m + H2O = (1,4-alpha-D-galacturonosyl)n + (1,4-alpha-D-galacturonosyl)m.. Its function is as follows. Involved in maceration and soft-rotting of plant tissue. Hydrolyzes the 1,4-alpha glycosidic bonds of de-esterified pectate in the smooth region of the plant cell wall. The sequence is that of Probable endopolygalacturonase B (pgaB) from Aspergillus niger (strain ATCC MYA-4892 / CBS 513.88 / FGSC A1513).